A 113-amino-acid polypeptide reads, in one-letter code: Phosphoribosyl-ATP pyrophosphatase (113 aa).

It belongs to the PRA-PH family.

The protein resides in the cytoplasm. It catalyses the reaction 1-(5-phospho-beta-D-ribosyl)-ATP + H2O = 1-(5-phospho-beta-D-ribosyl)-5'-AMP + diphosphate + H(+). It functions in the pathway amino-acid biosynthesis; L-histidine biosynthesis; L-histidine from 5-phospho-alpha-D-ribose 1-diphosphate: step 2/9. The protein is Phosphoribosyl-ATP pyrophosphatase of Janthinobacterium sp. (strain Marseille) (Minibacterium massiliensis).